The following is a 1483-amino-acid chain: Chromosome partition protein MukB (1483 aa).

34–41 (GGNGAGKS) is an ATP binding site. Coiled-coil stretches lie at residues 326–418 (LEAD…QYNQ), 444–480 (LETF…QAYQ), 509–601 (RHLA…MQRA), 780–804 (RAAC…FATL), 837–923 (EIRQ…AKLE), 977–1115 (EMLS…TAKA), and 1209–1265 (VEAI…LQNV). Residues 666 to 783 (PGGSEDQRLN…EVPLFGRAAC (118 aa)) are flexible hinge.

This sequence belongs to the SMC family. MukB subfamily. Homodimerization via its hinge domain. Binds to DNA via its C-terminal region. Interacts, and probably forms a ternary complex, with MukE and MukF via its C-terminal region. The complex formation is stimulated by calcium or magnesium. Interacts with tubulin-related protein FtsZ.

The protein localises to the cytoplasm. It is found in the nucleoid. In terms of biological role, plays a central role in chromosome condensation, segregation and cell cycle progression. Functions as a homodimer, which is essential for chromosome partition. Involved in negative DNA supercoiling in vivo, and by this means organize and compact chromosomes. May achieve or facilitate chromosome segregation by condensation DNA from both sides of a centrally located replisome during cell division. The sequence is that of Chromosome partition protein MukB from Shigella dysenteriae serotype 1 (strain Sd197).